The chain runs to 355 residues: Phospho-N-acetylmuramoyl-pentapeptide-transferase (355 aa).

10 consecutive transmembrane segments (helical) span residues 3–23, 56–76, 80–100, 120–140, 156–176, 185–205, 224–244, 251–271, 276–296, and 330–350; these read GVLIAAMVALVVSLLGTPWVI, VIIVAALAGYFLAHLVTGIGF, GLLVLMVMTGLGLVGFLDDYI, AAVAIVFGLLAVRFKNDAGLL, VGIIAFPLLAWIIIAATSNAV, LAAGTSAMVFGAYVIISFWQF, PLDVALVAAAAMGACFGFLWW, IFMGDTGSLALGGAFASIAIV, LLLVVLGGLFVIETLSVMIQV, and FWIVSGLAVAFGLGLFYAEFL.

It belongs to the glycosyltransferase 4 family. MraY subfamily. Requires Mg(2+) as cofactor.

The protein localises to the cell membrane. The catalysed reaction is UDP-N-acetyl-alpha-D-muramoyl-L-alanyl-gamma-D-glutamyl-meso-2,6-diaminopimeloyl-D-alanyl-D-alanine + di-trans,octa-cis-undecaprenyl phosphate = di-trans,octa-cis-undecaprenyl diphospho-N-acetyl-alpha-D-muramoyl-L-alanyl-D-glutamyl-meso-2,6-diaminopimeloyl-D-alanyl-D-alanine + UMP. Its pathway is cell wall biogenesis; peptidoglycan biosynthesis. Its function is as follows. Catalyzes the initial step of the lipid cycle reactions in the biosynthesis of the cell wall peptidoglycan: transfers peptidoglycan precursor phospho-MurNAc-pentapeptide from UDP-MurNAc-pentapeptide onto the lipid carrier undecaprenyl phosphate, yielding undecaprenyl-pyrophosphoryl-MurNAc-pentapeptide, known as lipid I. This chain is Phospho-N-acetylmuramoyl-pentapeptide-transferase, found in Frankia casuarinae (strain DSM 45818 / CECT 9043 / HFP020203 / CcI3).